The primary structure comprises 177 residues: Large ribosomal subunit protein uL6 (177 aa).

It belongs to the universal ribosomal protein uL6 family. In terms of assembly, part of the 50S ribosomal subunit.

In terms of biological role, this protein binds to the 23S rRNA, and is important in its secondary structure. It is located near the subunit interface in the base of the L7/L12 stalk, and near the tRNA binding site of the peptidyltransferase center. The polypeptide is Large ribosomal subunit protein uL6 (Rickettsia africae (strain ESF-5)).